Here is a 373-residue protein sequence, read N- to C-terminus: Phospho-N-acetylmuramoyl-pentapeptide-transferase (373 aa).

Helical transmembrane passes span 28–48 (LLTV…TIAY), 72–92 (TPTM…LCWA), 94–114 (LANP…AVGW), 135–155 (YFWL…IASQ), 177–197 (IVPL…YFVI), 212–232 (GLAI…SYVS), 252–272 (VTIV…YNAH), 276–296 (VFMG…IAVM), 301–321 (IAFA…ILQV), and 350–370 (QVVV…LMTL).

Belongs to the glycosyltransferase 4 family. MraY subfamily. The cofactor is Mg(2+).

It is found in the cell inner membrane. The catalysed reaction is UDP-N-acetyl-alpha-D-muramoyl-L-alanyl-gamma-D-glutamyl-meso-2,6-diaminopimeloyl-D-alanyl-D-alanine + di-trans,octa-cis-undecaprenyl phosphate = di-trans,octa-cis-undecaprenyl diphospho-N-acetyl-alpha-D-muramoyl-L-alanyl-D-glutamyl-meso-2,6-diaminopimeloyl-D-alanyl-D-alanine + UMP. Its pathway is cell wall biogenesis; peptidoglycan biosynthesis. In terms of biological role, catalyzes the initial step of the lipid cycle reactions in the biosynthesis of the cell wall peptidoglycan: transfers peptidoglycan precursor phospho-MurNAc-pentapeptide from UDP-MurNAc-pentapeptide onto the lipid carrier undecaprenyl phosphate, yielding undecaprenyl-pyrophosphoryl-MurNAc-pentapeptide, known as lipid I. This is Phospho-N-acetylmuramoyl-pentapeptide-transferase from Psychrobacter sp. (strain PRwf-1).